The following is a 254-amino-acid chain: Segregation and condensation protein A (254 aa).

It belongs to the ScpA family. In terms of assembly, component of a cohesin-like complex composed of ScpA, ScpB and the Smc homodimer, in which ScpA and ScpB bind to the head domain of Smc. The presence of the three proteins is required for the association of the complex with DNA.

Its subcellular location is the cytoplasm. Functionally, participates in chromosomal partition during cell division. May act via the formation of a condensin-like complex containing Smc and ScpB that pull DNA away from mid-cell into both cell halves. This Clostridium tetani (strain Massachusetts / E88) protein is Segregation and condensation protein A.